A 984-amino-acid chain; its full sequence is MRLLSFIYLVWLALLTGTPQVSATDNGKTSDVAWDKYSLSVKGERLFVFSGEFHYQRLPVPELWLDVFQKLRANGFNTISVYFFWSYHSASEDVFDFTTGAHDIQRLFDYAKQAGLYVIARAGPYCNAETSAGGFALWAANGQMGSERTSDEAYYKKWKPWILEVGKIIAANQITNGGPVILNQHENELQETTYDSNDTKVIYMEQVAKAFEEAGVVVPSSHNEKGMRTVSWSTDYKNVGGAVNVYGLDSYPGSLSCANPNSGFNLLRTYYQWFQNYSYTQPEYLAEFEGGWFQPWGGSFYDSCASELSPEFADVYYKNNIGSRVTLHNIYMTFGGTNWGHSAAPVVYTSYDYGSPLRETREIRDKLKQTKLLGLFTRVSKDLLKTYMEGNGTSYTSDDSIYTWALRNPDSDAGFYVVAHNTSSSREVTTFSLNITTSAGAMTIPDIELDGRQSKIIVTDYSIGSESSLLYSSAEVLTYATLDVDVLVFYLNAGQKGAFVFKDAPADLKYQTYGNSNLSALETSQGTQYSYTQGEGVTAVKFSNGVLVYLLDKETAWNFFAPPTVSSPTVAPNEHILVFGPYLVRGASIKHDTVEIVGDNSNSTSIEIYTGDEHVKKVSWNGNLIDTRATAYGSLIGTVPGAEDIEISLPSLSSWKAQDTLPEISPDYDDSRWTICNKTTSVNSVAPLSLPVLYSGDYGYHTGTKIYRGRFDGQNATGANVTVQNGVAAGWAAWLNGAYVGGFSGDPDKVASWEVLKFNHSSLRSRDNVLTIITDYTGHDQNSQKPIGTQNPRGIMGATLIGGGNFTLWRIQGNAGGEKNIDPVRGPMNEGGLYGERMGWHLPGYQVPESALDSSPLEGVSGAEGRFYTTSFQLDLEEDLDVPIGLQLSAPAGTEAVVQIFMNGYQFGHYLPHIGPQSLFPFPPGVIKNRGQNSLAISMWALTDAGARLEQVELKAYAKYRSGFDFNRDWTYLQPGWKDRTEYA.

The signal sequence occupies residues 1 to 23 (MRLLSFIYLVWLALLTGTPQVSA). Positions 82, 127, 128, 129, and 187 each coordinate substrate. Catalysis depends on glutamate 188, which acts as the Proton donor. Asparagine 197 is a glycosylation site (N-linked (GlcNAc...) asparagine). Tyrosine 251 serves as a coordination point for substrate. Residues cysteine 257 and cysteine 304 are joined by a disulfide bond. Residue asparagine 276 is glycosylated (N-linked (GlcNAc...) asparagine). Glutamate 287 acts as the Nucleophile in catalysis. Position 353 (tyrosine 353) interacts with substrate. N-linked (GlcNAc...) asparagine glycosylation is found at asparagine 391, asparagine 421, asparagine 434, asparagine 517, asparagine 602, asparagine 677, asparagine 715, asparagine 720, asparagine 759, and asparagine 805.

Belongs to the glycosyl hydrolase 35 family.

Its subcellular location is the secreted. The catalysed reaction is Hydrolysis of terminal non-reducing beta-D-galactose residues in beta-D-galactosides.. Its function is as follows. Cleaves beta-linked terminal galactosyl residues from gangliosides, glycoproteins, and glycosaminoglycans. This chain is Probable beta-galactosidase C (lacC), found in Aspergillus oryzae (strain ATCC 42149 / RIB 40) (Yellow koji mold).